Reading from the N-terminus, the 565-residue chain is Sulfite reductase [NADPH] hemoprotein beta-component (565 aa).

Positions 429, 435, 474, and 478 each coordinate [4Fe-4S] cluster. Siroheme is bound at residue C478.

This sequence belongs to the nitrite and sulfite reductase 4Fe-4S domain family. In terms of assembly, alpha(8)-beta(8). The alpha component is a flavoprotein, the beta component is a hemoprotein. The cofactor is siroheme. [4Fe-4S] cluster is required as a cofactor.

The catalysed reaction is hydrogen sulfide + 3 NADP(+) + 3 H2O = sulfite + 3 NADPH + 4 H(+). Its pathway is sulfur metabolism; hydrogen sulfide biosynthesis; hydrogen sulfide from sulfite (NADPH route): step 1/1. In terms of biological role, component of the sulfite reductase complex that catalyzes the 6-electron reduction of sulfite to sulfide. This is one of several activities required for the biosynthesis of L-cysteine from sulfate. This is Sulfite reductase [NADPH] hemoprotein beta-component from Shewanella putrefaciens (strain CN-32 / ATCC BAA-453).